The following is a 170-amino-acid chain: Urease accessory protein UreE (170 aa).

This sequence belongs to the UreE family.

Its subcellular location is the cytoplasm. Involved in urease metallocenter assembly. Binds nickel. Probably functions as a nickel donor during metallocenter assembly. The chain is Urease accessory protein UreE from Helicobacter pylori (strain J99 / ATCC 700824) (Campylobacter pylori J99).